The following is a 404-amino-acid chain: Ubiquitin-like modifier-activating enzyme 5 (404 aa).

Positions 83, 104, 127, 150, and 184 each coordinate ATP. Residues cysteine 226 and cysteine 229 each coordinate Zn(2+). Cysteine 250 (glycyl thioester intermediate) is an active-site residue. Positions 303 and 308 each coordinate Zn(2+). A disordered region spans residues 372–393; it reads APEKSSETSEETVTAATADETS. A compositionally biased stretch (low complexity) spans 382–391; that stretch reads ETVTAATADE.

This sequence belongs to the ubiquitin-activating E1 family. UBA5 subfamily.

In terms of biological role, E1-like enzyme which activates UFM1. The chain is Ubiquitin-like modifier-activating enzyme 5 from Drosophila simulans (Fruit fly).